The sequence spans 472 residues: MIIKQYLLKISLCVLLLGCDSAKKEISKNENSKTEVDYFADNGFGNAVALVQHPSGVYHNGITYVAYQGPLEDPYVASYNHETKEWKGPFKAGISEMGKDPSRKKKIDNHGKPALLIDNAGYVHIAFGGHGGMRHHGENTLGNYSYGKNLHAVSKKPYDISEWETRDNVSLFGTYSQFIKMDNGDIYLFYRHGAHRSDWVYQKSMDNGVTFSEPVSFLKHKRRTNIEAEDSWYPWVSRGNADDIIVAFDYHICRDNVNAQDARGHIPERHNVYYMVFDTKNGQWKNVKNERLQMPLTKEMADEKTLVRSIPNDWTFQGITDVDPDGNPHVAVLVGPDINARRSGPKRLQHFRWDGQQWLKSNTANLPRGDGDLEVTSATEVSIYLENKTSNDVGEISRWDSFNGGESFQKSKVFLQRENSGFVISSLIDNPHPDARIIVAEKEEGTDFRKMYLLGDNGPIKRSKKEAQVLND.

A signal peptide spans 1-21 (MIIKQYLLKISLCVLLLGCDS). N46 and N109 together coordinate substrate. Catalysis depends on H110, which acts as the Proton donor. Residues K112 and H130 each coordinate substrate. Y175 (proton acceptor) is an active-site residue. Substrate is bound by residues R191, H195, and Y233. H195 is a Zn(2+) binding site. H251, C253, and H265 together coordinate Zn(2+). Residue H265 coordinates substrate.

It belongs to the polysaccharide lyase 25 family.

In terms of biological role, ulvan lyase involved in ulvan degradation. Ulvan is the main polysaccharide component of the Ulvales (green seaweed) cell wall. It is composed of disaccharide building blocks comprising 3-sulfated rhamnose (Rha3S) linked to D-glucuronic acid (GlcA), L-iduronic acid (IduA), or D-xylose (Xyl). Ulvan lyase catalyzes the endolytic cleavage of the glycosidic bond between Rha3S and the uronic acids GlcA or IduA, producing oligosaccharides that have unsaturated 4-deoxy-L-threo-hex-4-enopyranosiduronic acid (deltaUA) at the non-reducing end. This results eventually in the degradation of the ulvan polysaccharide into deltaUA-Rha3S disaccharides and deltaUA-Rha3S-Xyl-Rha3S tetrasaccharides. This Nonlabens ulvanivorans (Persicivirga ulvanivorans) protein is Ulvan lyase.